The following is a 425-amino-acid chain: MAYFIDRRLNGKNKSMVNRQRFLRRYKSQIKQSIAGAINKRSVTDVESGESVSIPNTDINEPIFHQGRGGMRHRVHPGNDHFVQNDRIERPPSGGGGSSGQGSVSQDGEGEDEFVFQISKDEYLDLLFEDLALPNLQKNQHKQLNEYKTHRSGYTSTGVLVNISVVRSLQNSLVRRTAMTAGKRRAIRLLEAELDRLANSEPVQLLEQEKIRQEIAELRQKIDRVPFIDTFDLRYKNFERRPEPSSQAVIFCLMDVSGSMDQVTKDMAKRFYILLYLFLSRTYKNVDMVYIRHHTQAKEVDEHDFFYSQETGGTIVSSALKLMEEVIKERYDPNQWNIYAAQASDGDNWADDSPLCHDLLANHLLPLVRYYSYIEITRRAHQTLWREYEDLQARFDNFAMQHIRDQEDIYPMFRELFQRQLNESR.

The disordered stretch occupies residues 49 to 109; sequence GESVSIPNTD…GQGSVSQDGE (61 aa). Polar residues predominate over residues 50 to 59; it reads ESVSIPNTDI. The span at 77–90 shows a compositional bias: basic and acidic residues; that stretch reads PGNDHFVQNDRIER.

This sequence belongs to the UPF0229 family.

In Sodalis glossinidius (strain morsitans), this protein is UPF0229 protein SG1344.